The primary structure comprises 57 residues: Small nuclear protein PRAC1 (57 aa).

The interval 38 to 57 (RSDGSACNSGISGGRGRKIP) is disordered.

In terms of tissue distribution, highly expressed in prostate, rectum, and distal colon, and weakly expressed in bladder. Expressed in prostate cancer cell lines.

The protein resides in the nucleus. This Homo sapiens (Human) protein is Small nuclear protein PRAC1 (PRAC1).